Reading from the N-terminus, the 213-residue chain is Ribonuclease HII (213 aa).

The region spanning 27–213 is the RNase H type-2 domain; it reads HAVAGVDEAG…FRGVKEHVAP (187 aa). 3 residues coordinate a divalent metal cation: Asp33, Glu34, and Asp125.

This sequence belongs to the RNase HII family. Mn(2+) serves as cofactor. The cofactor is Mg(2+).

It localises to the cytoplasm. The enzyme catalyses Endonucleolytic cleavage to 5'-phosphomonoester.. In terms of biological role, endonuclease that specifically degrades the RNA of RNA-DNA hybrids. The sequence is that of Ribonuclease HII from Geobacter metallireducens (strain ATCC 53774 / DSM 7210 / GS-15).